Reading from the N-terminus, the 502-residue chain is Protein IWS1 homolog 1 (502 aa).

Residues 1 to 12 (MGFEDDPYRDVD) show a composition bias toward basic and acidic residues. Disordered regions lie at residues 1–61 (MGFE…DNDK) and 87–208 (DEDV…DEDE). Acidic residues-rich tracts occupy residues 13 to 22 (GEPIVDFDDF), 34 to 49 (QDFD…DWDG), and 87 to 97 (DEDVDDAEFDE). 2 stretches are compositionally biased toward basic and acidic residues: residues 138 to 151 (NRGE…DEMW) and 181 to 194 (PSER…DRSP). Position 185 is a phosphotyrosine (Tyr185). Positions 287–370 (TLLKNWLEPL…DKWSRPIFNK (84 aa)) constitute a TFIIS N-terminal domain. Positions 385-434 (VPYRRPPVKKPSNKATMESRDGDFDLEIRERKTGLTSGQSSRGDRQMTMR) are disordered. The segment covering 401–417 (MESRDGDFDLEIRERKT) has biased composition (basic and acidic residues).

It belongs to the IWS1 family. Interacts with BZR2/BES1 and SPT6 (via N-terminus). Interacts with ASHH2/SDG8.

It is found in the nucleus. Functionally, transcription factor involved in RNA polymerase II (RNAPII) transcription regulation. Involved in transcription elongation. May function at post-recruitment and elongation steps of transcription. May be recruited by BZR2/BES1 to target genes and promote their expression during transcription elongation process. Required for brassinosteroid (BR)-induced gene expression. Required the for regulation of numerous nitrogen-responsive genes in roots. Acts in roots to repress NRT2.1 transcription in response to high nitrogen supply. This repression is associated with an IWS1-dependent increase of trimethylation on 'Lys-27' H3K27me3 at the NRT2.1 locus. The sequence is that of Protein IWS1 homolog 1 from Arabidopsis thaliana (Mouse-ear cress).